The following is a 641-amino-acid chain: Tegument protein UL35 (641 aa).

3 disordered regions span residues 353 to 373 (ERGE…PREA), 500 to 572 (ASSS…PRQR), and 587 to 641 (AYSH…LRHL). Acidic residues predominate over residues 358-367 (GDEDEEQEND). Low complexity predominate over residues 500–563 (ASSSSASSSS…LSGSHGISSA (64 aa)). Basic residues predominate over residues 589 to 599 (SHHRRHRRRRS). Basic and acidic residues predominate over residues 632–641 (DDLAENLRHL).

This sequence belongs to the herpesviridae pp85 family. Interacts with UL82. Interacts with isoform UL35A. Interacts with host UBP7; this interaction significantly inhibits the ability of USP7 to form nuclear bodies. Interacts with host DCAF1 (via C-terminus). Interacts with host SNX5; this interaction allows proper gB localization during viral assembly. Interacts with host TBK1; this interaction prevents type I interferon production. As to quaternary structure, interacts with UL82. Interacts with isoform UL35. Interacts with host UBP7; this interaction significantly inhibits the ability of USP7 to form nuclear bodies. Interacts with host SNX5; this interaction allows proper gB localization during viral assembly.

The protein resides in the virion tegument. It is found in the host nucleus. It localises to the host cytoplasm. Functionally, plays important role in immediate-early gene expression through interaction with UL82. Forms nuclear bodies in host nucleus, independently of PML. In turn, UL35 nuclear bodies associate with and remodel PML bodies. Through interaction with host DCAF1, causes cells to accumulate in the G2 phase of the cell cycle by inducing a DNA damage response. Regulates viral assembly by controlling the localization of the essential gB through regulation of a retrograde transport pathway. This modulation occurs via binding and inhibition of host sorting nexin 5/SNX5. Also plays a role in the inhibition of pattern recognition receptor-mediated type I interferon signaling at the level of TBK1. Its function is as follows. Promotes cytoplasmic UL82 accumulation and inhibits UL35-containing nuclear bodies formation. Regulates viral assembly by controlling the localization of the essential gB through regulation of a retrograde transport pathway. This modulation occurs via binding and inhibition of host sorting nexin 5/SNX5. The protein is Tegument protein UL35 (UL35) of Homo sapiens (Human).